The following is a 189-amino-acid chain: Putative biopolymer transport protein ExbB-like 1 (189 aa).

3 helical membrane passes run 14–34 (FVTT…LWVF), 99–119 (LVVL…GTVV), and 147–167 (LIAT…YLIL).

Belongs to the ExbB/TolQ family.

The protein localises to the cell inner membrane. This Helicobacter pylori (strain ATCC 700392 / 26695) (Campylobacter pylori) protein is Putative biopolymer transport protein ExbB-like 1.